The primary structure comprises 34 residues: Sperm protein EM1 (34 aa).

A compositionally biased stretch (basic residues) spans 1–17 (AGSKSRSRSRSRSRSKS). Positions 1-34 (AGSKSRSRSRSRSRSKSPAKSASPKSAASPRASR) are disordered. 7 tandem repeats follow at residues 3-4 (SK), 5-6 (SR), 7-8 (SR), 9-10 (SR), 11-12 (SR), 13-14 (SR), and 15-16 (SK). The tract at residues 3–16 (SKSRSRSRSRSRSK) is 7 X 2 AA tandem repeats of S-[KR]. Low complexity predominate over residues 18–34 (PAKSASPKSAASPRASR).

In terms of tissue distribution, sperm.

Its subcellular location is the nucleus. The chain is Sperm protein EM1 from Ensis minor (Razor shell).